Reading from the N-terminus, the 255-residue chain is MASPRTPVSPPELPEKNFQYRQVQYWDQRYKDAADSGPYEWFGDFASFRALLEPELCPEDRILVLGCGNSALSYELFLGGFPNVTSVDYSPVVVAAMQVRYAHVPSLRWETMDVRALDFPSGSFDVVLEKGTLDAMLAGEPDPWNVSSEGVHTVDQVLSEVSRLLVPGGRFISMTSAGPHFRIRHYAQSRYDWSLRHTTYSSGFHFHFYIMHKGRALSVSQLALGAQILSSPSPPASPCFLQDSDNEDFLSAIQL.

S-adenosyl-L-methionine is bound by residues Trp-26 and Tyr-30. Tyr-39 carries the phosphotyrosine modification. Residues Trp-41, Gly-66, 88-89 (DY), 113-114 (DV), and Lys-130 each bind S-adenosyl-L-methionine. Residues 129–134 (EKGTLD) carry the Required for methyltransferase activity motif.

This sequence belongs to the methyltransferase superfamily.

The catalysed reaction is L-lysyl-[protein] + S-adenosyl-L-methionine = N(6)-methyl-L-lysyl-[protein] + S-adenosyl-L-homocysteine + H(+). The enzyme catalyses N(6)-methyl-L-lysyl-[protein] + S-adenosyl-L-methionine = N(6),N(6)-dimethyl-L-lysyl-[protein] + S-adenosyl-L-homocysteine + H(+). It catalyses the reaction N(6),N(6)-dimethyl-L-lysyl-[protein] + S-adenosyl-L-methionine = N(6),N(6),N(6)-trimethyl-L-lysyl-[protein] + S-adenosyl-L-homocysteine + H(+). Functionally, protein-lysine methyltransferase that efficiently catalyzes three successive methylations on 'Lys-36' in eukaryotic translation elongation factor 1 alpha (EEF1A1 or EEF1A2). The chain is EEF1A lysine methyltransferase 4 from Mus musculus (Mouse).